The following is a 459-amino-acid chain: Plasma alpha-L-fucosidase (459 aa).

Residues 1 to 23 (MRLGLLMFLPLLLLATRYRAVTA) form the signal peptide. N-linked (GlcNAc...) asparagine glycosylation is found at Asn-163 and Asn-231. Phosphoserine is present on Ser-293. Asn-369 carries an N-linked (GlcNAc...) asparagine glycan.

It belongs to the glycosyl hydrolase 29 family. As to quaternary structure, homotetramer.

Its subcellular location is the secreted. It carries out the reaction an alpha-L-fucoside + H2O = L-fucose + an alcohol. Alpha-L-fucosidase is responsible for hydrolyzing the alpha-1,6-linked fucose joined to the reducing-end N-acetylglucosamine of the carbohydrate moieties of glycoproteins. This chain is Plasma alpha-L-fucosidase (Fuca2), found in Rattus norvegicus (Rat).